We begin with the raw amino-acid sequence, 224 residues long: MTQDQLKQAVAQAAVDFILPKLDEKSVVGVGTGSTANFFIDALAQHKTAFDGAVASSEATAQRLKGHGIPVYELNSVSELEFYVDGADESDAHLHLIKGGGAALTREKIVAAVAKTFICIADGSKLVPVLGAFPLPVEVIPMARSHVARQLVKLGGDPVYREGVVTDNGNVILDVYNLQITNPVELEAQINAIVGVVTNGLFAARPADLLLLGTAEGVKSLKAE.

Substrate contacts are provided by residues 32 to 35 (TGST), 85 to 88 (DGAD), and 98 to 101 (KGGG). Catalysis depends on glutamate 107, which acts as the Proton acceptor. Lysine 125 is a binding site for substrate.

It belongs to the ribose 5-phosphate isomerase family. In terms of assembly, homodimer.

It catalyses the reaction aldehydo-D-ribose 5-phosphate = D-ribulose 5-phosphate. Its pathway is carbohydrate degradation; pentose phosphate pathway; D-ribose 5-phosphate from D-ribulose 5-phosphate (non-oxidative stage): step 1/1. Functionally, catalyzes the reversible conversion of ribose-5-phosphate to ribulose 5-phosphate. The chain is Ribose-5-phosphate isomerase A from Pseudomonas putida (strain ATCC 700007 / DSM 6899 / JCM 31910 / BCRC 17059 / LMG 24140 / F1).